The following is a 263-amino-acid chain: Type III pantothenate kinase (263 aa).

ATP is bound at residue 14–21 (DIGNTSVN). A substrate-binding site is contributed by 115–118 (GADR). Aspartate 117 acts as the Proton acceptor in catalysis. Aspartate 137 contacts K(+). Threonine 140 contributes to the ATP binding site. Residue threonine 192 coordinates substrate.

It belongs to the type III pantothenate kinase family. In terms of assembly, homodimer. Requires NH4(+) as cofactor. K(+) is required as a cofactor.

It localises to the cytoplasm. The enzyme catalyses (R)-pantothenate + ATP = (R)-4'-phosphopantothenate + ADP + H(+). Its pathway is cofactor biosynthesis; coenzyme A biosynthesis; CoA from (R)-pantothenate: step 1/5. Functionally, catalyzes the phosphorylation of pantothenate (Pan), the first step in CoA biosynthesis. This chain is Type III pantothenate kinase, found in Dehalococcoides mccartyi (strain ATCC BAA-2100 / JCM 16839 / KCTC 5957 / BAV1).